Consider the following 148-residue polypeptide: Large ribosomal subunit protein bL9 (148 aa).

The protein belongs to the bacterial ribosomal protein bL9 family.

In terms of biological role, binds to the 23S rRNA. This is Large ribosomal subunit protein bL9 from Geobacter sulfurreducens (strain ATCC 51573 / DSM 12127 / PCA).